We begin with the raw amino-acid sequence, 154 residues long: Probable transport accessory protein MmpS4 (154 aa).

2 helical membrane-spanning segments follow: residues 19–39 (IWIP…VYRV) and 97–117 (QLPW…NLVA).

It belongs to the MmpS family.

The protein resides in the cell membrane. This chain is Probable transport accessory protein MmpS4, found in Mycobacterium leprae (strain TN).